The chain runs to 100 residues: MTPWYLYLIRTADNKLYTGITTDVERRYQQHQSGKGAKALRGKGELTLAFSAPVGDRSLALRAEYRVKQLTKRQKERLVAEGAGFAELLSSLQTPKIKSD.

The region spanning T2–R77 is the GIY-YIG domain.

The protein belongs to the UPF0213 family.

This chain is UPF0213 protein YhbQ, found in Escherichia coli O8 (strain IAI1).